The following is a 274-amino-acid chain: Undecaprenyl-diphosphatase (274 aa).

The next 7 helical transmembrane spans lie at 4–24, 46–63, 82–102, 109–129, 184–204, 218–238, and 249–269; these read ILLLKALILGIVEGLTEFLPI, LFEIVIQSGAILAVVWEY, KFILNLFVAFLPLAILGLAFG, LFNPVTVASTFILGAFVILWA, ATEFSFFLAIPTLIVATFYQL, MWAVGFVAAFVSAFLCVRWLL, and FAWYRIAFGIVVLATWQFGWV.

The protein belongs to the UppP family.

It localises to the cell inner membrane. It catalyses the reaction di-trans,octa-cis-undecaprenyl diphosphate + H2O = di-trans,octa-cis-undecaprenyl phosphate + phosphate + H(+). Its function is as follows. Catalyzes the dephosphorylation of undecaprenyl diphosphate (UPP). Confers resistance to bacitracin. This Dechloromonas aromatica (strain RCB) protein is Undecaprenyl-diphosphatase.